The following is a 435-amino-acid chain: 3-phosphoshikimate 1-carboxyvinyltransferase (435 aa).

3-phosphoshikimate-binding residues include lysine 25, serine 26, and arginine 30. Lysine 25 contacts phosphoenolpyruvate. Positions 99 and 130 each coordinate phosphoenolpyruvate. 7 residues coordinate 3-phosphoshikimate: serine 176, serine 177, glutamine 178, serine 204, aspartate 319, asparagine 342, and lysine 346. Glutamine 178 contributes to the phosphoenolpyruvate binding site. Aspartate 319 functions as the Proton acceptor in the catalytic mechanism. Phosphoenolpyruvate contacts are provided by arginine 350, arginine 394, and lysine 419.

Belongs to the EPSP synthase family. In terms of assembly, monomer.

The protein resides in the cytoplasm. It carries out the reaction 3-phosphoshikimate + phosphoenolpyruvate = 5-O-(1-carboxyvinyl)-3-phosphoshikimate + phosphate. Its pathway is metabolic intermediate biosynthesis; chorismate biosynthesis; chorismate from D-erythrose 4-phosphate and phosphoenolpyruvate: step 6/7. In terms of biological role, catalyzes the transfer of the enolpyruvyl moiety of phosphoenolpyruvate (PEP) to the 5-hydroxyl of shikimate-3-phosphate (S3P) to produce enolpyruvyl shikimate-3-phosphate and inorganic phosphate. This is 3-phosphoshikimate 1-carboxyvinyltransferase from Haemophilus ducreyi (strain 35000HP / ATCC 700724).